We begin with the raw amino-acid sequence, 87 residues long: Small ribosomal subunit protein eS21 (87 aa).

Belongs to the eukaryotic ribosomal protein eS21 family. In terms of assembly, component of the small ribosomal subunit. Mature ribosomes consist of a small (40S) and a large (60S) subunit. The 40S subunit contains about 33 different proteins and 1 molecule of RNA (18S). The 60S subunit contains about 49 different proteins and 3 molecules of RNA (25S, 5.8S and 5S).

It is found in the cytoplasm. Required for the processing of the 20S rRNA-precursor to mature 18S rRNA in a late step of the maturation of 40S ribosomal subunits. Has a physiological role leading to 18S rRNA stability. The sequence is that of Small ribosomal subunit protein eS21 (RPS21) from Candida glabrata (strain ATCC 2001 / BCRC 20586 / JCM 3761 / NBRC 0622 / NRRL Y-65 / CBS 138) (Yeast).